A 483-amino-acid chain; its full sequence is Regulatory protein ViaA (483 aa).

The protein belongs to the ViaA family. In terms of assembly, homodimer. Interacts with RavA.

Its subcellular location is the cytoplasm. Functionally, component of the RavA-ViaA chaperone complex, which may act on the membrane to optimize the function of some of the respiratory chains. ViaA stimulates the ATPase activity of RavA. This is Regulatory protein ViaA from Escherichia coli (strain SMS-3-5 / SECEC).